A 444-amino-acid polypeptide reads, in one-letter code: Phosphoglucosamine mutase (444 aa).

The active-site Phosphoserine intermediate is the S102. The Mg(2+) site is built by S102, D241, D243, and D245. S102 is subject to Phosphoserine.

Belongs to the phosphohexose mutase family. It depends on Mg(2+) as a cofactor. In terms of processing, activated by phosphorylation.

It catalyses the reaction alpha-D-glucosamine 1-phosphate = D-glucosamine 6-phosphate. In terms of biological role, catalyzes the conversion of glucosamine-6-phosphate to glucosamine-1-phosphate. The protein is Phosphoglucosamine mutase of Haemophilus ducreyi (strain 35000HP / ATCC 700724).